A 1115-amino-acid polypeptide reads, in one-letter code: MTMMTPPPLDQQEDEEMLVPNPDLVEGPQPMEVAQTDPAATAVENPPPEDPPSLKFTWTIPMFTRLNTRKHYSDVFVVGGYKWRILIFPKGNNVDHLSMYLDVADAANLPYGWSRYSQFSLAVVNQVNNRYSIRKETQHQFNARESDWGFTSFMPLSELYEPTRGYLVNDTVLIEAEVAVRKVLDYWSYDSKKETGFVGLKNQGATCYMNSLLQTLYHIPYFRKAVYHMPTTENDAPTASIPLALQSLFYKLQYNDTSVATKELTKSFGWDTYDSFMQHDVQELNRVLCEKLEDKMKGTVVEGTIQKLFEGHHMNYIECINVDYKSTRKESFYDLQLDVKGCKDVYASFDKYVEVERLEGDNKYHAEGHDLQDAKKGVLFIDFPPVLQLQLKRFEYDFMRDTMVKINDRYEFPLQLDLDREDGRYLSPDADKSVRNLYTLHSVLVHSGGVHGGHYYAFIRPTLSDQWYKFDDERVTKEDVKRALEEQYGGEEELPQNNPGFNNPPFKFTKYSNAYMLVYIRESDKDKIICNVDEKDIAEHLRVRLKKEQEEKEDKRKYKAQAHLFTTIKVARDDDITEQIGKNIYFDLVDHEKVRSFRIQKQTPFQQFKEEVAKEFGVPVQLQRFWIWAKRQNHTYRPNRPLSPNEELQTVGQIREASNKANNAELKLFLEIERGPDDLPIPPPEKTSEDILLFFKLYDPENAVLRYVGRLMVKSSSKPMDIVGQLNKMAGFAPDEEIELFEEIKFEPCVMCEQIDKKTSFRLCQIEDGDIICYQKPLSIEESEFRYPDVPSFLEYVQNRELVRFRTLEKPKEDEFTMELSKLHTYDDVVERVAEKLGLDDPSKLRLTSHNCYSQQPKPQPIKYRGVDHLSDMLVHYNQTSDILYYEVLDIPLPELQGLKTLKVAFHSATKDEVIIHNIRLPKQSTVGDVINELKTKVELSHQDAELRLLEVFFHKIYKIFPSTERIENINDQYWTLRAEEIPEEEKNIGPNDRLIHVYHFTKEAGQNQQVQNFGEPFFLVIHEGETLEEIKTRIQKKLHVPDEDFAKWKFASFSMGRPDYLLDTDVVYNRFQRRDVYGAWEQYLGLEHIDNAPKRAYAANQNRHAYEKPVKIYN.

The interval 1-51 (MTMMTPPPLDQQEDEEMLVPNPDLVEGPQPMEVAQTDPAATAVENPPPEDP) is disordered. The MATH domain maps to 53 to 178 (SLKFTWTIPM…NDTVLIEAEV (126 aa)). In terms of domain architecture, USP spans 198–522 (VGLKNQGATC…NAYMLVYIRE (325 aa)). Catalysis depends on cysteine 207, which acts as the Nucleophile. Residue histidine 454 is the Proton acceptor of the active site.

Belongs to the peptidase C19 family. Interacts with SIC/RON3. Interacts with RGI1 and RGI2.

The enzyme catalyses Thiol-dependent hydrolysis of ester, thioester, amide, peptide and isopeptide bonds formed by the C-terminal Gly of ubiquitin (a 76-residue protein attached to proteins as an intracellular targeting signal).. In terms of biological role, recognizes and hydrolyzes the peptide bond at the C-terminal Gly of ubiquitin. Involved in the processing of poly-ubiquitin precursors as well as that of ubiquitinated proteins. Positive regulator of root meristem development that, together with UBP12, prevents the ubiquitination and turnover of RGFR1 induced by the RGF1 hormone peptide, thus influencing PLT1 and PLT2 expression. This chain is Ubiquitin C-terminal hydrolase 13, found in Arabidopsis thaliana (Mouse-ear cress).